Reading from the N-terminus, the 83-residue chain is Putative cytochrome b5 B11H24.095 (83 aa).

The 77-residue stretch at 2–78 (SQTFTKSQVA…GTKLKVGTLA (77 aa)) folds into the Cytochrome b5 heme-binding domain. 2 residues coordinate heme: H37 and H60.

This sequence belongs to the cytochrome b5 family.

The chain is Putative cytochrome b5 B11H24.095 from Neurospora crassa (strain ATCC 24698 / 74-OR23-1A / CBS 708.71 / DSM 1257 / FGSC 987).